The chain runs to 370 residues: Aminomethyltransferase (370 aa).

This sequence belongs to the GcvT family. In terms of assembly, the glycine cleavage system is composed of four proteins: P, T, L and H.

It catalyses the reaction N(6)-[(R)-S(8)-aminomethyldihydrolipoyl]-L-lysyl-[protein] + (6S)-5,6,7,8-tetrahydrofolate = N(6)-[(R)-dihydrolipoyl]-L-lysyl-[protein] + (6R)-5,10-methylene-5,6,7,8-tetrahydrofolate + NH4(+). The glycine cleavage system catalyzes the degradation of glycine. This is Aminomethyltransferase from Stenotrophomonas maltophilia (strain K279a).